Reading from the N-terminus, the 306-residue chain is Ribonuclease Z (306 aa).

Residues His-63, His-65, Asp-67, His-68, His-140, Asp-211, and His-269 each coordinate Zn(2+). Residue Asp-67 is the Proton acceptor of the active site.

It belongs to the RNase Z family. As to quaternary structure, homodimer. Zn(2+) is required as a cofactor.

The enzyme catalyses Endonucleolytic cleavage of RNA, removing extra 3' nucleotides from tRNA precursor, generating 3' termini of tRNAs. A 3'-hydroxy group is left at the tRNA terminus and a 5'-phosphoryl group is left at the trailer molecule.. Its function is as follows. Zinc phosphodiesterase, which displays some tRNA 3'-processing endonuclease activity. Probably involved in tRNA maturation, by removing a 3'-trailer from precursor tRNA. In Listeria welshimeri serovar 6b (strain ATCC 35897 / DSM 20650 / CCUG 15529 / CIP 8149 / NCTC 11857 / SLCC 5334 / V8), this protein is Ribonuclease Z.